Consider the following 517-residue polypeptide: DNA-(apurinic or apyrimidinic site) endonuclease 2 (517 aa).

2 residues coordinate Mg(2+): Asn-9 and Glu-34. Residues 82–90 (EEGLSGVFC) carry the Claspin-like CKB motif motif. Residue Tyr-142 is part of the active site. Mg(2+)-binding residues include Asp-183, Asn-185, Asp-299, and His-300. The active-site Proton donor/acceptor is the Asp-183. The active-site Proton acceptor is the His-300. Polar residues predominate over residues 347-362 (GNTTEESSELTGTPSF). The disordered stretch occupies residues 347-366 (GNTTEESSELTGTPSFTEGA). A PCNA interacting protein (PIP) box motif is present at residues 395–402 (QGNLLSFF). Positions 463, 466, 489, and 503 each coordinate Zn(2+). The segment at 463–512 (CKGHSEPCVLRTVKKAGPNCGRQFYVCARPEGHSSNPQARCNFFLWLTKK) adopts a GRF-type zinc-finger fold.

It belongs to the DNA repair enzymes AP/ExoA family. Interacts (via PIP box and GRF-type Zinc finger domain) with pcna; the interaction is required for 3 -5 SSB end resection, assembly of a checkpoint protein complex to SSB sites, and SSB signaling. Interacts with chek1. It depends on Mg(2+) as a cofactor. The cofactor is Mn(2+). Expressed in eggs (at protein level).

The protein localises to the nucleus. It localises to the chromosome. The protein resides in the cytoplasm. It is found in the mitochondrion. The enzyme catalyses Exonucleolytic cleavage in the 3'- to 5'-direction to yield nucleoside 5'-phosphates.. Its activity is regulated as follows. 3'-5' nuclease activity is stimulated in presence of pcna. Its function is as follows. Functions as a weak apurinic/apyrimidinic (AP) endodeoxyribonuclease in the DNA base excision repair (BER) pathway of DNA lesions induced by oxidative and alkylating agents. Initiates repair of AP sites in DNA by catalyzing hydrolytic incision of the phosphodiester backbone immediately adjacent to the damage, generating a single-strand break with 5'-deoxyribose phosphate and 3'-hydroxyl ends. Exhibits 3'-5' exonuclease activity on a 3' DNA substrate; nuclease activity is stimulated by interaction with pcna. Has a preference for the 3' recessed ends over blunt-ended substrates, in both the presence and the absence of pcna. Generates single-stranded DNA (ssDNA) via 3'-5' single-strand break (SSB) end resection, thereby promoting a DNA damage response via replication protein A (rpa2)-binding to ssDNA and the recruitment of a checkpoint protein complex, including atr, atr-interacting protein atrip, and rad9, to damage sites following oxidative stress. Plays a role in reversing blocked 3' DNA ends, problematic lesions that preclude DNA synthesis. Required for chek1 phosphorylation induced by hydrogen peroxide but not by stalled replication forks. This is DNA-(apurinic or apyrimidinic site) endonuclease 2 from Xenopus laevis (African clawed frog).